The primary structure comprises 552 residues: Hyaluronan synthase 2 (552 aa).

At 1 to 11 (MHCERFLCILR) the chain is on the cytoplasmic side. A helical transmembrane segment spans residues 12–32 (IIGTTLFGVSLLLGITAAYIV). Topologically, residues 33-45 (GYQFIQTDNYYFS) are extracellular. A helical membrane pass occupies residues 46–66 (FGLYGAFLASHLIIQSLFAFL). Residues 67–374 (EHRKMKKSLE…NAMWFHKHHL (308 aa)) lie on the Cytoplasmic side of the membrane. Threonine 110 bears the Phosphothreonine mark. Lysine 190 participates in a covalent cross-link: Glycyl lysine isopeptide (Lys-Gly) (interchain with G-Cter in ubiquitin). An O-linked (GlcNAc) serine glycan is attached at serine 221. Threonine 328 is subject to Phosphothreonine. Residues 375-395 (WMTYEAVITGFFPFFLIATVI) traverse the membrane as a helical segment. Residues 396-402 (QLFYRGK) lie on the Extracellular side of the membrane. Residues 403–423 (IWNILLFLLTVQLVGLIKSSF) traverse the membrane as a helical segment. The Cytoplasmic segment spans residues 424 to 429 (ASCLRG). The helical transmembrane segment at 430–450 (NIVMVFMSLYSVLYMSSLLPA) threads the bilayer. Residues 451–475 (KMFAIATINKAGWGTSGRKTIVVNF) lie on the Extracellular side of the membrane. Residues 476 to 496 (IGLIPVSVWFTILLGGVIFTI) form a helical membrane-spanning segment. Residues 497–510 (YKESKKPFSESKQT) are Cytoplasmic-facing. The chain crosses the membrane as a helical span at residues 511–531 (VLIVGTLLYACYWVMLLTLYV). The Extracellular portion of the chain corresponds to 532–552 (VLINKCGRRKKGQQYDMVLDV).

It belongs to the NodC/HAS family. In terms of assembly, homodimer; dimerization promotes enzymatic activity. Forms heterodimer with HAS3. Forms heterodimer with HAS1. Mg(2+) serves as cofactor. In terms of processing, phosphorylation at Thr-328 is essential for hyaluronan synthase activity. Post-translationally, O-GlcNAcylation at Ser-221 increases the stability of HAS2 and plasma membrane localization. Ubiquitination at Lys-190; this ubiquitination is essential for hyaluronan synthase activity and homo- or hetero-oligomerization. Can also be poly-ubiquitinated. Deubiquitinated by USP17L22/USP17 and USP4. USP17L22/USP17 efficiently removes 'Lys-63'- and 'Lys-48'-linked polyubiquitin chains, whereas USP4 preferentially removes monoubiquitination and, partially, both 'Lys-63'- and 'Lys-48'-linked polyubiquitin chain. Overexpressed in skin fibroblasts.

Its subcellular location is the cell membrane. It localises to the endoplasmic reticulum membrane. The protein resides in the vesicle. The protein localises to the golgi apparatus membrane. It is found in the lysosome. The catalysed reaction is [hyaluronan](n) + UDP-N-acetyl-alpha-D-glucosamine = N-acetyl-beta-D-glucosaminyl-(1-&gt;4)-[hyaluronan](n) + UDP + H(+). It carries out the reaction N-acetyl-beta-D-glucosaminyl-(1-&gt;4)-[hyaluronan](n) + UDP-alpha-D-glucuronate = [hyaluronan](n+1) + UDP + H(+). Its pathway is glycan biosynthesis; hyaluronan biosynthesis. Functionally, catalyzes the addition of GlcNAc or GlcUA monosaccharides to the nascent hyaluronan polymer. Therefore, it is essential to hyaluronan synthesis a major component of most extracellular matrices that has a structural role in tissues architectures and regulates cell adhesion, migration and differentiation. This is one of three isoenzymes responsible for cellular hyaluronan synthesis and it is particularly responsible for the synthesis of high molecular mass hyaluronan. This is Hyaluronan synthase 2 (Has2) from Heterocephalus glaber (Naked mole rat).